The primary structure comprises 217 residues: Ras-related protein Rab-19 (217 aa).

GTP contacts are provided by Ser-26, Val-28, Gly-29, Lys-30, Thr-31, Cys-32, Tyr-42, Ser-43, Glu-44, Ser-45, and Thr-49. Residue Thr-31 participates in Mg(2+) binding. The short motif at 39 to 54 is the Switch 1 element; that stretch reads SGVYSESQQNTIGVDF. 2 residues coordinate Mg(2+): Thr-49 and Asp-72. The Switch 2 signature appears at 74–89; that stretch reads AGQERFRTITQSYYRS. GTP is bound by residues Gly-75, Asn-130, Lys-131, Asp-133, Ser-161, Ala-162, and Lys-163. Residues Cys-215 and Cys-217 are each lipidated (S-geranylgeranyl cysteine). Cys-217 bears the Cysteine methyl ester mark.

This sequence belongs to the small GTPase superfamily. Rab family. Mg(2+) serves as cofactor.

It is found in the cell membrane. It catalyses the reaction GTP + H2O = GDP + phosphate + H(+). Regulated by guanine nucleotide exchange factors (GEFs) which promote the exchange of bound GDP for free GTP. Regulated by GTPase activating proteins (GAPs) which increase the GTP hydrolysis activity. Inhibited by GDP dissociation inhibitors (GDIs). Functionally, the small GTPases Rab are key regulators of intracellular membrane trafficking, from the formation of transport vesicles to their fusion with membranes. Rabs cycle between an inactive GDP-bound form and an active GTP-bound form that is able to recruit to membranes different set of downstream effectors directly responsible for vesicle formation, movement, tethering and fusion. This chain is Ras-related protein Rab-19, found in Rattus norvegicus (Rat).